The primary structure comprises 72 residues: Translation initiation factor IF-1 (72 aa).

The S1-like domain occupies methionine 1–lysine 72.

Belongs to the IF-1 family. Component of the 30S ribosomal translation pre-initiation complex which assembles on the 30S ribosome in the order IF-2 and IF-3, IF-1 and N-formylmethionyl-tRNA(fMet); mRNA recruitment can occur at any time during PIC assembly.

The protein resides in the cytoplasm. Functionally, one of the essential components for the initiation of protein synthesis. Stabilizes the binding of IF-2 and IF-3 on the 30S subunit to which N-formylmethionyl-tRNA(fMet) subsequently binds. Helps modulate mRNA selection, yielding the 30S pre-initiation complex (PIC). Upon addition of the 50S ribosomal subunit IF-1, IF-2 and IF-3 are released leaving the mature 70S translation initiation complex. The polypeptide is Translation initiation factor IF-1 (Aliarcobacter butzleri (strain RM4018) (Arcobacter butzleri)).